The chain runs to 943 residues: Protein translocase subunit SecA (943 aa).

Residues Gln90, 108 to 112 (GEGKT), and Asp509 contribute to the ATP site. The tract at residues 534–561 (KPDNEHKPPIPQQRNSKSGGGFSANVDS) is disordered.

This sequence belongs to the SecA family. Monomer and homodimer. Part of the essential Sec protein translocation apparatus which comprises SecA, SecYEG and auxiliary proteins SecDF. Other proteins may also be involved.

It is found in the cell inner membrane. The protein localises to the cellular thylakoid membrane. The protein resides in the cytoplasm. It catalyses the reaction ATP + H2O + cellular proteinSide 1 = ADP + phosphate + cellular proteinSide 2.. Part of the Sec protein translocase complex. Interacts with the SecYEG preprotein conducting channel. Has a central role in coupling the hydrolysis of ATP to the transfer of proteins into and across the cell membrane, serving as an ATP-driven molecular motor driving the stepwise translocation of polypeptide chains across the membrane. Its function is as follows. Probably participates in protein translocation into and across both the cytoplasmic and thylakoid membranes in cyanobacterial cells. The sequence is that of Protein translocase subunit SecA from Prochlorococcus marinus subsp. pastoris (strain CCMP1986 / NIES-2087 / MED4).